We begin with the raw amino-acid sequence, 412 residues long: Peptidase T (412 aa).

Residue His84 participates in Zn(2+) binding. The active site involves Asp86. Asp146 contributes to the Zn(2+) binding site. Residue Glu179 is the Proton acceptor of the active site. Glu180, Asp202, and His385 together coordinate Zn(2+).

This sequence belongs to the peptidase M20B family. It depends on Zn(2+) as a cofactor.

The protein resides in the cytoplasm. It catalyses the reaction Release of the N-terminal residue from a tripeptide.. Cleaves the N-terminal amino acid of tripeptides. In Pasteurella multocida (strain Pm70), this protein is Peptidase T.